The chain runs to 361 residues: Homocitrate synthase (361 aa).

The Pyruvate carboxyltransferase domain maps to Met-1–Tyr-249. Arg-8 provides a ligand contact to 2-oxoglutarate. Glu-9 is a Mg(2+) binding site. 3 residues coordinate 2-oxoglutarate: His-68, Arg-128, and Thr-162. His-188 and His-190 together coordinate Mg(2+). His-282 serves as the catalytic Proton acceptor.

Belongs to the alpha-IPM synthase/homocitrate synthase family. Homocitrate synthase LYS20/LYS21 subfamily. Mg(2+) is required as a cofactor. The cofactor is Mn(2+).

It catalyses the reaction acetyl-CoA + 2-oxoglutarate + H2O = (2R)-homocitrate + CoA + H(+). It functions in the pathway amino-acid biosynthesis; L-lysine biosynthesis via AAA pathway; L-alpha-aminoadipate from 2-oxoglutarate: step 1/5. In terms of biological role, catalyzes the aldol-type condensation of 2-oxoglutarate with acetyl-CoA to yield homocitrate. Carries out the first step of the alpha-aminoadipate (AAA) lysine biosynthesis pathway. This Pyrococcus horikoshii (strain ATCC 700860 / DSM 12428 / JCM 9974 / NBRC 100139 / OT-3) protein is Homocitrate synthase.